The chain runs to 332 residues: Probable farnesyl diphosphate synthase (332 aa).

Residues K75, R78, and H107 each coordinate isopentenyl diphosphate. Mg(2+) contacts are provided by D114 and D120. R125 serves as a coordination point for (2E)-geranyl diphosphate. R126 contributes to the isopentenyl diphosphate binding site. Residues K208, S209, Q250, and K267 each contribute to the (2E)-geranyl diphosphate site.

Belongs to the FPP/GGPP synthase family. Mg(2+) is required as a cofactor.

The protein resides in the cytoplasm. The catalysed reaction is isopentenyl diphosphate + (2E)-geranyl diphosphate = (2E,6E)-farnesyl diphosphate + diphosphate. This is Probable farnesyl diphosphate synthase (fppS) from Bradyrhizobium diazoefficiens (strain JCM 10833 / BCRC 13528 / IAM 13628 / NBRC 14792 / USDA 110).